Reading from the N-terminus, the 94-residue chain is MVYISNGQVLDSRNQSPWRVSFLTDFFWGIAEFVVFFFKTLLQQDVKKRRGYGSSSDSRYDDGRGPPGNPPRRMGRISHLRGPSPPPMAGGUGR.

The helical transmembrane segment at 20–42 threads the bilayer; it reads VSFLTDFFWGIAEFVVFFFKTLL. The tract at residues 46–94 is disordered; sequence VKKRRGYGSSSDSRYDDGRGPPGNPPRRMGRISHLRGPSPPPMAGGUGR. Sec-92 is a non-standard amino acid (selenocysteine).

Belongs to the selenoprotein K family. Interacts with DERL1, DERL2, DERL3 and SELENOS. The SELENOK-SELENOS complex interacts with VCP. Interacts with ZDHHC6. Post-translationally, cleaved by CAPN2/m-calpain in resting macrophages but not in activated macrophages. Macrophage activation up-regulates expression of the calpain inhibitor CAST/calpastatin, resulting in inhibition of CAPN2 activity. In terms of processing, truncated SELENOK proteins produced by failed UGA/Sec decoding are ubiquitinated by the CRL2(KLHDC2) complex, which recognizes the diglycine (Gly-Gly) at the C-terminus of truncated SELENOK proteins. High expression in spleen and intestine (at protein level). Expressed in a range of immune cells including T and B-cells and also in myeloid cells including macrophages, neutrophils and dendritic cells (at protein level).

Its subcellular location is the endoplasmic reticulum membrane. It localises to the cell membrane. Its function is as follows. Required for Ca(2+) flux in immune cells and plays a role in T-cell proliferation and in T-cell and neutrophil migration. Involved in endoplasmic reticulum-associated degradation (ERAD) of soluble glycosylated proteins. Required for palmitoylation and cell surface expression of CD36 and involved in macrophage uptake of low-density lipoprotein and in foam cell formation. Together with ZDHHC6, required for palmitoylation of ITPR1 in immune cells, leading to regulate ITPR1 stability and function. Plays a role in protection of cells from ER stress-induced apoptosis. Protects cells from oxidative stress when overexpressed in cardiomyocytes. In Mus musculus (Mouse), this protein is Selenoprotein K.